The primary structure comprises 314 residues: DNA-directed RNA polymerase subunit alpha (314 aa).

The tract at residues 1-228 (MIEIEKPNIE…EHLNIFVGLT (228 aa)) is alpha N-terminal domain (alpha-NTD). Residues 245-314 (KEKVLEMTIE…ELGLGLRNEE (70 aa)) form an alpha C-terminal domain (alpha-CTD) region.

It belongs to the RNA polymerase alpha chain family. As to quaternary structure, homodimer. The RNAP catalytic core consists of 2 alpha, 1 beta, 1 beta' and 1 omega subunit. When a sigma factor is associated with the core the holoenzyme is formed, which can initiate transcription.

It catalyses the reaction RNA(n) + a ribonucleoside 5'-triphosphate = RNA(n+1) + diphosphate. Its function is as follows. DNA-dependent RNA polymerase catalyzes the transcription of DNA into RNA using the four ribonucleoside triphosphates as substrates. The sequence is that of DNA-directed RNA polymerase subunit alpha from Shouchella clausii (strain KSM-K16) (Alkalihalobacillus clausii).